Here is a 126-residue protein sequence, read N- to C-terminus: Cyclin-dependent kinase 2-associated protein 2 (126 aa).

The segment at 1–48 (MSYKPIAPAPSSTPGSSTPGPGTPVPTGSVPSPSGSVPGAGAPFRPLF) is disordered. Over residues 9 to 43 (APSSTPGSSTPGPGTPVPTGSVPSPSGSVPGAGAP) the composition is skewed to low complexity. Residues 64–106 (PPGAQGSQSTYTDLLSVIEEMGKEIRPTYAGSKSAMERLKRGI) are interaction with CDK2.

Belongs to the CDK2AP family. As to quaternary structure, component of the nucleosome remodeling and deacetylase (NuRD) repressor complex, composed of core proteins MTA1, MTA2, MTA3, RBBP4, RBBP7, HDAC1, HDAC2, MBD2, MBD3, and peripherally associated proteins CDK2AP1, CDK2AP2, GATAD2A, GATAD2B, CHD3, CHD4 and CHD5. The exact stoichiometry of the NuRD complex is unknown, and some subunits such as MBD2 and MBD3, GATAD2A and GATAD2B, and CHD3, CHD4 and CHD5 define mutually exclusive NuRD complexes. Interacts with CDK2AP1. Interacts with CDK2. Interacts with MAPK1. Phosphorylated by MAPK1 and CDK2. As to expression, ubiquitous.

It localises to the cytoplasm. Its subcellular location is the nucleus. Functionally, acts as a component of the histone deacetylase NuRD complex which participates in the remodeling of chromatin. Inhibits cell cycle G1/S phase transition by repressing CDK2 expression and activation; represses CDK2 activation by inhibiting its interaction with cyclin E and A. Plays a role in regulating the self-renewal of embryonic stem cells (ESCs) and in maintaining cell survival during terminal differentiation of ESCs. Regulates microtubule organization of metaphase II oocytes. This Homo sapiens (Human) protein is Cyclin-dependent kinase 2-associated protein 2 (CDK2AP2).